Consider the following 36-residue polypeptide: Neurotoxin PRTx26An0C3 (36 aa).

3 disulfide bridges follow: Cys3-Cys17, Cys10-Cys22, and Cys16-Cys34.

As to expression, expressed by the venom gland.

Its subcellular location is the secreted. Functionally, neurotoxin. Causes spastic paralysis and death in mice. Moderate inhibitor of L-type calcium channels (Cav1/CACNA1). The protein is Neurotoxin PRTx26An0C3 of Phoneutria nigriventer (Brazilian armed spider).